The primary structure comprises 363 residues: Ferrochelatase (363 aa).

Positions 209 and 290 each coordinate Fe cation.

Belongs to the ferrochelatase family.

Its subcellular location is the cytoplasm. The enzyme catalyses heme b + 2 H(+) = protoporphyrin IX + Fe(2+). Its pathway is porphyrin-containing compound metabolism; protoheme biosynthesis; protoheme from protoporphyrin-IX: step 1/1. Its function is as follows. Catalyzes the ferrous insertion into protoporphyrin IX. The sequence is that of Ferrochelatase from Methylibium petroleiphilum (strain ATCC BAA-1232 / LMG 22953 / PM1).